The chain runs to 150 residues: MSGRKKTREPKEENVLGPAVREGEHVFGVAHIFASFNDTFIHVTDLSGRETLVRITGGMKVKADRDESSPYAAMLASQDVAQRCKELGITALHIKLRATGGNKTKTPGPGAQSALRALARSGMKIGRIEDVTPVPTDSTRRKGGRRGRRL.

Residues 129–150 (EDVTPVPTDSTRRKGGRRGRRL) form a disordered region. Positions 141–150 (RKGGRRGRRL) are enriched in basic residues.

It belongs to the universal ribosomal protein uS11 family.

The sequence is that of Small ribosomal subunit protein uS11y from Zea mays (Maize).